A 230-amino-acid polypeptide reads, in one-letter code: Sugar fermentation stimulation protein homolog (230 aa).

The protein belongs to the SfsA family.

This chain is Sugar fermentation stimulation protein homolog, found in Clostridium kluyveri (strain NBRC 12016).